The chain runs to 129 residues: MNWLLVIAGAAAGAPLRYLTDRAVQTRHDTVFPWGTFTVNVTASLLLGLVAGAAGAGAPPAWVASEQVVSLVGTGLCGALSTYSTFSYETLRLAEDGARLLAAANVAGSVLAAFGAAALGAALARAVWG.

Transmembrane regions (helical) follow at residues 43–63 (ASLLLGLVAGAAGAGAPPAWV), 68–88 (VVSLVGTGLCGALSTYSTFSY), and 100–120 (LLAAANVAGSVLAAFGAAALG). 2 residues coordinate Na(+): Gly-78 and Ser-81.

It belongs to the fluoride channel Fluc/FEX (TC 1.A.43) family.

The protein resides in the cell membrane. The enzyme catalyses fluoride(in) = fluoride(out). With respect to regulation, na(+) is not transported, but it plays an essential structural role and its presence is essential for fluoride channel function. In terms of biological role, fluoride-specific ion channel. Important for reducing fluoride concentration in the cell, thus reducing its toxicity. In Frankia casuarinae (strain DSM 45818 / CECT 9043 / HFP020203 / CcI3), this protein is Fluoride-specific ion channel FluC 1.